The following is a 3841-amino-acid chain: Transformation/transcription domain-associated protein (3841 aa).

2 disordered regions span residues 491–516 and 2002–2027; these read TPTVTTPALPPPAPPTPVTPAPPPAT and QQPESEADPGSVGEGTSGASAAMKRG. Over residues 498–515 the composition is skewed to pro residues; it reads ALPPPAPPTPVTPAPPPA. Residues 2025–2040 carry the Bipartite nuclear localization signal motif; sequence KRGMSVDSAQDVKRFR. The 569-residue stretch at 2671–3239 folds into the FAT domain; it reads VLKYLGKTHN…YFPIRTLYLT (569 aa). A disordered region spans residues 3249–3271; sequence KSDSGQQQPSSAAAQTHSASDPG. A compositionally biased stretch (low complexity) spans 3251-3268; the sequence is DSGQQQPSSAAAQTHSAS. The 324-residue stretch at 3482 to 3805 folds into the PI3K/PI4K catalytic domain; that stretch reads MPRVEIVQKH…AVTAIMTRLH (324 aa). The interval 3488 to 3494 is G-loop; it reads VQKHNTA. The interval 3669 to 3677 is catalytic loop; the sequence is HLNRLNPEM. The segment at 3689-3714 is activation loop; that stretch reads VSYFRFDINDATGDLDANRPVPFRLT. An FATC domain is found at 3809–3841; the sequence is QFEGGESKVNTLVAAANSLDNLCRMDPAWHPWL.

The protein belongs to the PI3/PI4-kinase family. TRA1 subfamily.

Its subcellular location is the nucleus. Its function is as follows. Adapter protein, which is found in various multiprotein chromatin complexes with histone acetyltransferase activity (HAT), which gives a specific tag for epigenetic transcription activation. May be required for the mitotic checkpoint and normal cell cycle progression. May play a role in the formation and maintenance of the auditory system. This Danio rerio (Zebrafish) protein is Transformation/transcription domain-associated protein.